The chain runs to 505 residues: MNNIKKYILTLDEGTTSARALITDKEGNIIAVEQSEFTQYFPKEGWVEHDAIEIWNTQRSALVQVLNKSGIDPSQIEAIGITNQRETAVVWNKETGLPIYNAIVWQDQRTADYCQTFDKDTLEMVKQKSGLIINPYFSGTKVKWILDNVPNARQLAKEGKLMFGTINTWLIYRLTGGEVFVTDHTNAQRTLLYNIHTNDWDDELLKLFDIPRNILPEIKSCSEVYGYTFKGLFSKGNEQRIKIASSIGDQQSALFGQLCLEKGQVKVTYGTGCFILTNTGEEIVKSNHGLLTTVAYSFKDKVYYALEGSVMIAGAAVQWLRDNLRIVYNAIETEWYAGQVKDDRRVYVVPSFTGLGSPYWDSFSRGAIFGLDRGTRREHIVRATLEAIAYQANDVVDAMGKDMKKPIEIFKVDGGAANNKFLMQFQSNISQSKVIKPTNIETTAMGAAFMAGLAVGYWENVEELKKTYKVHFELTPELSKPEVDKLIKGWKVAVQRTFKWVEEIE.

An ADP-binding site is contributed by T15. Residues T15, T16, and S17 each coordinate ATP. A sn-glycerol 3-phosphate-binding site is contributed by T15. Position 19 (R19) interacts with ADP. The sn-glycerol 3-phosphate site is built by R85, E86, Y136, and D249. R85, E86, Y136, D249, and Q250 together coordinate glycerol. Positions 271 and 314 each coordinate ADP. ATP contacts are provided by T271, G314, Q318, and G415. Residues G415 and N419 each coordinate ADP.

It belongs to the FGGY kinase family.

It carries out the reaction glycerol + ATP = sn-glycerol 3-phosphate + ADP + H(+). Its pathway is polyol metabolism; glycerol degradation via glycerol kinase pathway; sn-glycerol 3-phosphate from glycerol: step 1/1. Inhibited by fructose 1,6-bisphosphate (FBP). Functionally, key enzyme in the regulation of glycerol uptake and metabolism. Catalyzes the phosphorylation of glycerol to yield sn-glycerol 3-phosphate. This chain is Glycerol kinase, found in Mycoplasma capricolum subsp. capricolum (strain California kid / ATCC 27343 / NCTC 10154).